Consider the following 113-residue polypeptide: Integration host factor subunit alpha (113 aa).

The disordered stretch occupies residues 88 to 113; it reads ALNGGVSDETEGADDDDDDEEGEGDE. Residues 95 to 113 are compositionally biased toward acidic residues; sequence DETEGADDDDDDEEGEGDE.

It belongs to the bacterial histone-like protein family. As to quaternary structure, heterodimer of an alpha and a beta chain.

Functionally, this protein is one of the two subunits of integration host factor, a specific DNA-binding protein that functions in genetic recombination as well as in transcriptional and translational control. This chain is Integration host factor subunit alpha, found in Anaeromyxobacter dehalogenans (strain 2CP-C).